Reading from the N-terminus, the 211-residue chain is Major fimbrial subunit (211 aa).

The first 20 residues, 1 to 20, serve as a signal peptide directing secretion; the sequence is MKKTLLGSLILLAFAGNVQA. Cys43 and Cys83 are disulfide-bonded.

This sequence belongs to the fimbrial protein family.

The protein localises to the fimbrium. In terms of biological role, mediates adherence to oropharyngeal epithelial cells. Helps the airway colonization process. The chain is Major fimbrial subunit (hifA) from Haemophilus influenzae.